The chain runs to 342 residues: Heat-inducible transcription repressor HrcA (342 aa).

The protein belongs to the HrcA family.

Its function is as follows. Negative regulator of class I heat shock genes (grpE-dnaK-dnaJ and groELS operons). Prevents heat-shock induction of these operons. The polypeptide is Heat-inducible transcription repressor HrcA (Shouchella clausii (strain KSM-K16) (Alkalihalobacillus clausii)).